The primary structure comprises 426 residues: Serine--tRNA ligase (426 aa).

233–235 (TAE) contributes to the L-serine binding site. ATP is bound at residue 264-266 (RSE). Position 287 (E287) interacts with L-serine. 351–354 (EISS) serves as a coordination point for ATP. L-serine is bound at residue S387.

This sequence belongs to the class-II aminoacyl-tRNA synthetase family. Type-1 seryl-tRNA synthetase subfamily. As to quaternary structure, homodimer. The tRNA molecule binds across the dimer.

The protein resides in the cytoplasm. The enzyme catalyses tRNA(Ser) + L-serine + ATP = L-seryl-tRNA(Ser) + AMP + diphosphate + H(+). It carries out the reaction tRNA(Sec) + L-serine + ATP = L-seryl-tRNA(Sec) + AMP + diphosphate + H(+). Its pathway is aminoacyl-tRNA biosynthesis; selenocysteinyl-tRNA(Sec) biosynthesis; L-seryl-tRNA(Sec) from L-serine and tRNA(Sec): step 1/1. Catalyzes the attachment of serine to tRNA(Ser). Is also able to aminoacylate tRNA(Sec) with serine, to form the misacylated tRNA L-seryl-tRNA(Sec), which will be further converted into selenocysteinyl-tRNA(Sec). This Stutzerimonas stutzeri (strain A1501) (Pseudomonas stutzeri) protein is Serine--tRNA ligase.